A 407-amino-acid chain; its full sequence is MKTYLVGGAVRDGLLNLPVKDKDWVVVGASPQQMLDRGYQQVGRDFPVFLHPESHEEYALARTERKSGRGYTGFTCYSAPDVTLEQDLARRDLTINAIAQDAGGNYCDPYGGRADLQQRLLRHVSGAFNEDPLRVLRVARFAARFAHLNFRIADETLLLMQAMTHSGELHHLTPERVWKETELALQTPSPQVFFQVLRDCGALAVLFPELDNLYGVPAPAKWHPEIDTGVHALMALAMAARLSQEIDIRFATLFHDVGKALTPKVKWPSHHGHGPAGVPLVAALCERLRVPNALRDLALLVTEFHDLVHTIQCQPPTELVALFDRVDAWRKPQRVQQIALTSEADARGRTGFENNPYPQGDYLREAWRVVQSVSTKEVVDAGFKGMAVREELTRRRIAALDAWKQVQ.

Residues Gly8 and Arg11 each contribute to the ATP site. CTP contacts are provided by Gly8 and Arg11. Mg(2+) contacts are provided by Asp21 and Asp23. Residues Arg91, Arg137, and Arg140 each contribute to the ATP site. The CTP site is built by Arg91, Arg137, and Arg140. The HD domain occupies 228 to 329 (TGVHALMALA…VALFDRVDAW (102 aa)).

It belongs to the tRNA nucleotidyltransferase/poly(A) polymerase family. Bacterial CCA-adding enzyme type 1 subfamily. In terms of assembly, monomer. Can also form homodimers and oligomers. The cofactor is Mg(2+). It depends on Ni(2+) as a cofactor.

The catalysed reaction is a tRNA precursor + 2 CTP + ATP = a tRNA with a 3' CCA end + 3 diphosphate. It catalyses the reaction a tRNA with a 3' CCA end + 2 CTP + ATP = a tRNA with a 3' CCACCA end + 3 diphosphate. Functionally, catalyzes the addition and repair of the essential 3'-terminal CCA sequence in tRNAs without using a nucleic acid template. Adds these three nucleotides in the order of C, C, and A to the tRNA nucleotide-73, using CTP and ATP as substrates and producing inorganic pyrophosphate. tRNA 3'-terminal CCA addition is required both for tRNA processing and repair. Also involved in tRNA surveillance by mediating tandem CCA addition to generate a CCACCA at the 3' terminus of unstable tRNAs. While stable tRNAs receive only 3'-terminal CCA, unstable tRNAs are marked with CCACCA and rapidly degraded. This is Multifunctional CCA protein from Erwinia tasmaniensis (strain DSM 17950 / CFBP 7177 / CIP 109463 / NCPPB 4357 / Et1/99).